The primary structure comprises 284 residues: MDAIKKKMQAMKLEKDNAMDKADTCEQQARDANLRAEKVNEEVRELQKKLAQVEEDLILNKNKLEQANKDLEEKEKQLTATEAEVAALNRKVQQIEEDLEKSEERSGTAQQKLLEAQQSADENNRMCKVLENRAQQDEERMDQLTNQLKEARLLAEDADGKSDEVSRKLAFVEDELEVAEDRVKSGDAKISELEEELKVVGNSLKSLEVSEEKANQRVEEFKKQLKTLTGKLKEAEARAEYAEKTVKKLQKEVDRLEDELGINKDRYKSLADEMDSTFAELAGY.

Disordered stretches follow at residues 1-26 (MDAI…DTCE) and 96-124 (EEDL…DENN). Residues 1–276 (MDAIKKKMQA…YKSLADEMDS (276 aa)) adopt a coiled-coil conformation. Residues 12–26 (KLEKDNAMDKADTCE) show a composition bias toward basic and acidic residues. Over residues 107–121 (GTAQQKLLEAQQSAD) the composition is skewed to polar residues.

It belongs to the tropomyosin family. In terms of assembly, homodimer.

Functionally, tropomyosin, in association with the troponin complex, plays a central role in the calcium dependent regulation of muscle contraction. The protein is Tropomyosin-1 of Bombyx mori (Silk moth).